The following is a 393-amino-acid chain: Formate-dependent phosphoribosylglycinamide formyltransferase (393 aa).

Residues E22–L23 and E82 each bind N(1)-(5-phospho-beta-D-ribosyl)glycinamide. ATP-binding positions include R114, K155, S160–Q165, E195–V198, and E203. The ATP-grasp domain maps to L119–L308. Positions 267 and 279 each coordinate Mg(2+). Residues D286, K355, and R362 to R363 each bind N(1)-(5-phospho-beta-D-ribosyl)glycinamide.

It belongs to the PurK/PurT family. As to quaternary structure, homodimer.

It carries out the reaction N(1)-(5-phospho-beta-D-ribosyl)glycinamide + formate + ATP = N(2)-formyl-N(1)-(5-phospho-beta-D-ribosyl)glycinamide + ADP + phosphate + H(+). It participates in purine metabolism; IMP biosynthesis via de novo pathway; N(2)-formyl-N(1)-(5-phospho-D-ribosyl)glycinamide from N(1)-(5-phospho-D-ribosyl)glycinamide (formate route): step 1/1. Its function is as follows. Involved in the de novo purine biosynthesis. Catalyzes the transfer of formate to 5-phospho-ribosyl-glycinamide (GAR), producing 5-phospho-ribosyl-N-formylglycinamide (FGAR). Formate is provided by PurU via hydrolysis of 10-formyl-tetrahydrofolate. This chain is Formate-dependent phosphoribosylglycinamide formyltransferase, found in Yersinia enterocolitica serotype O:8 / biotype 1B (strain NCTC 13174 / 8081).